The chain runs to 331 residues: Ferrochelatase (331 aa).

Fe cation-binding residues include His-187 and Glu-286.

The protein belongs to the ferrochelatase family.

It localises to the cytoplasm. The catalysed reaction is heme b + 2 H(+) = protoporphyrin IX + Fe(2+). The protein operates within porphyrin-containing compound metabolism; protoheme biosynthesis; protoheme from protoporphyrin-IX: step 1/1. In terms of biological role, catalyzes the ferrous insertion into protoporphyrin IX. The chain is Ferrochelatase from Legionella pneumophila (strain Paris).